The following is a 297-amino-acid chain: HTH-type transcriptional regulator ArgP (297 aa).

The HTH lysR-type domain occupies 4 to 60; the sequence is PDYRTLQALDAVIRERGFERAAQKLCITQSAVSQRIKQLENMFGQPLLVRTVPPRPT. Positions 21–40 form a DNA-binding region, H-T-H motif; it reads FERAAQKLCITQSAVSQRIK.

Belongs to the LysR transcriptional regulatory family. As to quaternary structure, homodimer.

In terms of biological role, controls the transcription of genes involved in arginine and lysine metabolism. The polypeptide is HTH-type transcriptional regulator ArgP (Klebsiella pneumoniae (strain 342)).